Here is a 107-residue protein sequence, read N- to C-terminus: U1-lycotoxin-Ls1b (107 aa).

Residues 1 to 20 form the signal peptide; the sequence is MMKVLVVVALLVTHISYSSS. The propeptide occupies 21-41; that stretch reads EGIDDLEADELLSLMANEQTR. 4 disulfide bridges follow: cysteine 44-cysteine 59, cysteine 51-cysteine 68, cysteine 58-cysteine 86, and cysteine 70-cysteine 84.

The protein belongs to the neurotoxin 19 (CSTX) family. 04 (U1-Lctx) subfamily. Expressed by the venom gland.

It localises to the secreted. This Lycosa singoriensis (Wolf spider) protein is U1-lycotoxin-Ls1b.